We begin with the raw amino-acid sequence, 334 residues long: Ornithine carbamoyltransferase subunit I (334 aa).

Residues Ser-56–Thr-59, Gln-83, Arg-107, and His-134–Gln-137 each bind carbamoyl phosphate. Residues Asn-168, Asp-232, and Ser-236 to Met-237 contribute to the L-ornithine site. Cys-274 is a binding site for Zn(2+). Residues Cys-274–Leu-275 and Arg-320 each bind carbamoyl phosphate.

This sequence belongs to the aspartate/ornithine carbamoyltransferase superfamily. OTCase family. As to quaternary structure, in E.coli strain K12, trimer of identical or non-identical chains are composed of ArgI (I) and/or ArgF (F). The trimer has the following composition: FFI, FFF, FII, III. E.coli strains B and W, which are known to contain only ArgI, produce only a trimer of identical chains (III).

It is found in the cytoplasm. The enzyme catalyses carbamoyl phosphate + L-ornithine = L-citrulline + phosphate + H(+). It functions in the pathway amino-acid biosynthesis; L-arginine biosynthesis; L-arginine from L-ornithine and carbamoyl phosphate: step 1/3. Its activity is regulated as follows. Reversely inhibited by N-(N-Sulfodiaminophosphinyl)-L-ornithine. Zinc is an allosteric regulator of the substrate-bound enzyme and a competitive inhibitor of the free enzyme. Reversibly catalyzes the transfer of the carbamoyl group from carbamoyl phosphate (CP) to the N(epsilon) atom of ornithine (ORN) to produce L-citrulline, which is a substrate for argininosuccinate synthetase, the enzyme involved in the final step in arginine biosynthesis. In Escherichia coli (strain K12), this protein is Ornithine carbamoyltransferase subunit I.